Here is a 228-residue protein sequence, read N- to C-terminus: Ion-translocating oxidoreductase complex subunit G (228 aa).

A helical transmembrane segment spans residues 35–55 (ALSLGLVCALVAVALLLGNQL). Residue threonine 197 is modified to FMN phosphoryl threonine.

It belongs to the RnfG family. As to quaternary structure, the complex is composed of six subunits: RnfA, RnfB, RnfC, RnfD, RnfE and RnfG. Requires FMN as cofactor.

The protein localises to the cell inner membrane. Functionally, part of a membrane-bound complex that couples electron transfer with translocation of ions across the membrane. The protein is Ion-translocating oxidoreductase complex subunit G of Stutzerimonas stutzeri (Pseudomonas stutzeri).